A 338-amino-acid chain; its full sequence is Lipoate-protein ligase A (338 aa).

Residues 29–216 (PATQRVLFLW…AFFAHYGEHV (188 aa)) form the BPL/LPL catalytic domain. ATP contacts are provided by residues R71, 76–79 (GAVF), and K134. K134 provides a ligand contact to (R)-lipoate.

The protein belongs to the LplA family. In terms of assembly, monomer.

It localises to the cytoplasm. The enzyme catalyses L-lysyl-[lipoyl-carrier protein] + (R)-lipoate + ATP = N(6)-[(R)-lipoyl]-L-lysyl-[lipoyl-carrier protein] + AMP + diphosphate + H(+). It participates in protein modification; protein lipoylation via exogenous pathway; protein N(6)-(lipoyl)lysine from lipoate: step 1/2. The protein operates within protein modification; protein lipoylation via exogenous pathway; protein N(6)-(lipoyl)lysine from lipoate: step 2/2. Functionally, catalyzes both the ATP-dependent activation of exogenously supplied lipoate to lipoyl-AMP and the transfer of the activated lipoyl onto the lipoyl domains of lipoate-dependent enzymes. The sequence is that of Lipoate-protein ligase A from Escherichia coli O17:K52:H18 (strain UMN026 / ExPEC).